The chain runs to 285 residues: 4-hydroxybenzoate octaprenyltransferase (285 aa).

8 helical membrane passes run 28–48 (LWAM…WIFV), 86–106 (IAAW…FALV), 110–130 (NALT…YPFF), 133–153 (FFAI…PMAF), 165–185 (WLML…YAMV), 210–230 (IMLC…LLGL), 232–252 (WPYW…YTLI), and 262–284 (AAFR…AYAI).

This sequence belongs to the UbiA prenyltransferase family. It depends on Mg(2+) as a cofactor.

The protein resides in the cell inner membrane. It carries out the reaction all-trans-octaprenyl diphosphate + 4-hydroxybenzoate = 4-hydroxy-3-(all-trans-octaprenyl)benzoate + diphosphate. Its pathway is cofactor biosynthesis; ubiquinone biosynthesis. In terms of biological role, catalyzes the prenylation of para-hydroxybenzoate (PHB) with an all-trans polyprenyl group. Mediates the second step in the final reaction sequence of ubiquinone-8 (UQ-8) biosynthesis, which is the condensation of the polyisoprenoid side chain with PHB, generating the first membrane-bound Q intermediate 3-octaprenyl-4-hydroxybenzoate. This chain is 4-hydroxybenzoate octaprenyltransferase, found in Cupriavidus necator (strain ATCC 17699 / DSM 428 / KCTC 22496 / NCIMB 10442 / H16 / Stanier 337) (Ralstonia eutropha).